The primary structure comprises 145 residues: 3-hydroxyacyl-[acyl-carrier-protein] dehydratase FabZ (145 aa).

The active site involves His-50.

The protein belongs to the thioester dehydratase family. FabZ subfamily.

The protein localises to the cytoplasm. The enzyme catalyses a (3R)-hydroxyacyl-[ACP] = a (2E)-enoyl-[ACP] + H2O. In terms of biological role, involved in unsaturated fatty acids biosynthesis. Catalyzes the dehydration of short chain beta-hydroxyacyl-ACPs and long chain saturated and unsaturated beta-hydroxyacyl-ACPs. This is 3-hydroxyacyl-[acyl-carrier-protein] dehydratase FabZ from Coxiella burnetii (strain CbuK_Q154) (Coxiella burnetii (strain Q154)).